We begin with the raw amino-acid sequence, 216 residues long: Peptide methionine sulfoxide reductase MsrA (216 aa).

The active site involves C54.

Belongs to the MsrA Met sulfoxide reductase family.

It catalyses the reaction L-methionyl-[protein] + [thioredoxin]-disulfide + H2O = L-methionyl-(S)-S-oxide-[protein] + [thioredoxin]-dithiol. It carries out the reaction [thioredoxin]-disulfide + L-methionine + H2O = L-methionine (S)-S-oxide + [thioredoxin]-dithiol. Functionally, has an important function as a repair enzyme for proteins that have been inactivated by oxidation. Catalyzes the reversible oxidation-reduction of methionine sulfoxide in proteins to methionine. This chain is Peptide methionine sulfoxide reductase MsrA, found in Xanthomonas campestris pv. campestris (strain 8004).